Consider the following 156-residue polypeptide: Peroxisomal membrane associated protein 20 (156 aa).

The 155-residue stretch at 2-156 (VAVGSTLPKV…SSADKVLSSL (155 aa)) folds into the Thioredoxin domain. Cys-43 (cysteine sulfenic acid (-SOH) intermediate) is an active-site residue.

This sequence belongs to the peroxiredoxin family. Prx5 subfamily. Homodimer; disulfide-linked, upon oxidation.

Its subcellular location is the cytoplasm. It is found in the nucleus. May act as a chaperone rather than a peroxidase. Has no thioredoxin-dependent peroxidase activity. Shows weak chaperone activity. This chain is Peroxisomal membrane associated protein 20, found in Schizosaccharomyces pombe (strain 972 / ATCC 24843) (Fission yeast).